Here is a 312-residue protein sequence, read N- to C-terminus: 2-aminophenol 1,6-dioxygenase subunit beta (312 aa).

Fe cation is bound by residues H13, H62, and E251.

This sequence belongs to the LigB/MhpB extradiol dioxygenase family. In terms of assembly, the APD complex is a heterotetramer of 2 alpha (CnbCa) and 2 beta (CnbCb) subunits. Fe(2+) is required as a cofactor.

The enzyme catalyses 2-aminophenol + O2 = 2-aminomuconate 6-semialdehyde. It carries out the reaction 2-amino-5-chlorophenol + O2 = 2-amino-5-chloromuconate 6-semialdehyde. It functions in the pathway xenobiotic degradation; nitrobenzene degradation. Its pathway is xenobiotic degradation; 4-chloronitrobenzene degradation. Its activity is regulated as follows. Complete loss of activity in the presence of Ni(2+), Co(2+), Cd(2+), Zn(2+) and hydrogen peroxide, however activity with hydrogen peroxide partially restored upon addition of excess ascorbate. Partially inhibited by Fe(2+), Mg(2+), Ca(2+), Mn(2+), Cu(2+) and also by EDTA, at 2 mM concentration. Total activity inhibited in the presence of catechol or 4-nitrocatechol but completely restored after removal of catechol and addition of 2 mM Fe(2+) and 5 mM ascorbate. Component of the 2-aminophenol 1,6-dioxygenase (APD) complex that catalyzes the ring fission of 2-aminophenol to produce 2-aminomuconic semialdehyde. CnbCb seems to be the catalytic subunit of the complex. Also active on other substrates such as 2-amino-5-chlorophenol (68% activity), protocatechuate (33% activity) and catechol (5% activity). Both 2-aminophenol and 2-amino-5-cholorophenol are likely native substrates for this dioxygenase which is involved in the reductive degradation pathway of both nitrobenzene (NB) and 4-chloronitrobenzene (4-CNB), allowing C.testosteroni strain CNB-1 to grow on these compounds as sole source of carbon, nitrogen, and energy. The chain is 2-aminophenol 1,6-dioxygenase subunit beta from Comamonas testosteroni (Pseudomonas testosteroni).